Consider the following 118-residue polypeptide: Holo-[acyl-carrier-protein] synthase (118 aa).

Mg(2+) is bound by residues D8 and E58.

Belongs to the P-Pant transferase superfamily. AcpS family. Requires Mg(2+) as cofactor.

Its subcellular location is the cytoplasm. It catalyses the reaction apo-[ACP] + CoA = holo-[ACP] + adenosine 3',5'-bisphosphate + H(+). Functionally, transfers the 4'-phosphopantetheine moiety from coenzyme A to a Ser of acyl-carrier-protein. This chain is Holo-[acyl-carrier-protein] synthase, found in Lactobacillus helveticus (strain DPC 4571).